A 165-amino-acid polypeptide reads, in one-letter code: Protein-export protein SecB (165 aa).

The protein belongs to the SecB family. As to quaternary structure, homotetramer, a dimer of dimers. One homotetramer interacts with 1 SecA dimer.

The protein resides in the cytoplasm. One of the proteins required for the normal export of preproteins out of the cell cytoplasm. It is a molecular chaperone that binds to a subset of precursor proteins, maintaining them in a translocation-competent state. It also specifically binds to its receptor SecA. The polypeptide is Protein-export protein SecB (Marinobacter nauticus (strain ATCC 700491 / DSM 11845 / VT8) (Marinobacter aquaeolei)).